A 176-amino-acid polypeptide reads, in one-letter code: ADP-ribosylation factor-like protein 8d (176 aa).

Residues 21–26 (NSGKTS), 40–43 (MIPT), 62–66 (DLGGQ), and 121–124 (NKID) each bind GTP.

The protein belongs to the small GTPase superfamily. Arf family. As to quaternary structure, interacts with tubulin.

It is found in the late endosome membrane. The protein resides in the lysosome membrane. Its subcellular location is the cytoplasm. It localises to the cytoskeleton. The protein localises to the spindle. May play a role in lysosome motility. May play a role in chromosome segregation. The polypeptide is ADP-ribosylation factor-like protein 8d (Arabidopsis thaliana (Mouse-ear cress)).